The following is a 263-amino-acid chain: Retinoic acid early transcript 1E (263 aa).

Residues 1–30 (MRRISLTSSPVRLLLFLLLLLIALEIMVGG) form the signal peptide. Residues 31 to 116 (HSLCFNFTIK…DIKPQIKTSD (86 aa)) form an MHC class I alpha-1 like; down-regulates the cell surface expression of KLRK1 region. Residues 31-225 (HSLCFNFTIK…IHWSSSSLPD (195 aa)) lie on the Extracellular side of the membrane. Residues N36, N154, and N212 are each glycosylated (N-linked (GlcNAc...) asparagine). Residues 117-207 (PSTLQVEMFC…GHWEAMPEPT (91 aa)) are MHC class I alpha-2 like; down-regulates the cell surface expression of KLRK1. C126 and C189 are oxidised to a cystine. A helical membrane pass occupies residues 226 to 248 (RWIILGAFILLVLMGIVLICVWW). The Cytoplasmic portion of the chain corresponds to 249-263 (QNGEWQAGLWPLRTS).

Belongs to the MHC class I family. As to quaternary structure, binds to KLRK1/NKG2D. In terms of assembly, (Microbial infection) Contrary to other family members, does not interact with CMV glycoprotein UL16. In terms of tissue distribution, predominantly expressed in the skin, but also expressed in testis and trachea. Up-regulated in tumor cells of different origins. Expression progressively decreased after treatment of tumor cells with retinoic acid.

Its subcellular location is the membrane. The protein localises to the secreted. Binds and activates the KLRK1/NKG2D receptor, mediating natural killer cell cytotoxicity. The chain is Retinoic acid early transcript 1E from Homo sapiens (Human).